Consider the following 586-residue polypeptide: Putative ABC transporter ATP-binding protein MG187 homolog (586 aa).

Residues 13–464 (IEFKNIVVDF…PANEFVATFL (452 aa)) form the ABC transporter domain. Residue 45-52 (GPSGCGKT) participates in ATP binding.

It belongs to the ABC transporter superfamily.

The protein is Putative ABC transporter ATP-binding protein MG187 homolog of Mycoplasma pneumoniae (strain ATCC 29342 / M129 / Subtype 1) (Mycoplasmoides pneumoniae).